A 156-amino-acid polypeptide reads, in one-letter code: Cyclic pyranopterin monophosphate synthase (156 aa).

Residues 75-77 (LCH) and 111-112 (ME) contribute to the substrate site. Aspartate 126 is a catalytic residue.

Belongs to the MoaC family. As to quaternary structure, homohexamer; trimer of dimers.

The catalysed reaction is (8S)-3',8-cyclo-7,8-dihydroguanosine 5'-triphosphate = cyclic pyranopterin phosphate + diphosphate. It functions in the pathway cofactor biosynthesis; molybdopterin biosynthesis. In terms of biological role, catalyzes the conversion of (8S)-3',8-cyclo-7,8-dihydroguanosine 5'-triphosphate to cyclic pyranopterin monophosphate (cPMP). The sequence is that of Cyclic pyranopterin monophosphate synthase from Corynebacterium glutamicum (strain R).